A 328-amino-acid chain; its full sequence is Delta(3,5)-Delta(2,4)-dienoyl-CoA isomerase, mitochondrial (328 aa).

A mitochondrion-targeting transit peptide spans 1 to 33 (MAAGIVASRRLRDLLTRRLTGSNYPGLSISLRL). Residues 116–120 (AGIDL) and G174 each bind substrate. K231 bears the N6-succinyllysine mark. The residue at position 268 (S268) is a Phosphoserine. Positions 326–328 (SKL) match the Microbody targeting signal motif. N6-acetyllysine is present on K327.

The protein belongs to the enoyl-CoA hydratase/isomerase family. Homohexamer.

The protein resides in the mitochondrion. It localises to the peroxisome. The enzyme catalyses (3E,5Z)-octadienoyl-CoA = (2E,4E)-octadienoyl-CoA. The catalysed reaction is (3E,5Z,8Z,11Z,14Z)-eicosapentaenoyl-CoA = (2E,4E,8Z,11Z,14Z)-eicosapentaenoyl-CoA. Its pathway is lipid metabolism; fatty acid beta-oxidation. Isomerization of 3-trans,5-cis-dienoyl-CoA to 2-trans,4-trans-dienoyl-CoA. This chain is Delta(3,5)-Delta(2,4)-dienoyl-CoA isomerase, mitochondrial, found in Homo sapiens (Human).